The primary structure comprises 106 residues: Glycoprotein GP16 (106 aa).

Glycosylated.

It localises to the host cytoplasm. Functionally, may be involved in formation or transport of the nucleocapsid-containing vesicles around the nuclear membrane. In Autographa californica nuclear polyhedrosis virus (AcMNPV), this protein is Glycoprotein GP16 (GP16).